The following is a 207-amino-acid chain: Large ribosomal subunit protein uL4 (207 aa).

Residues 47-77 (GTADTKTRAEVSGGGRKPWRQKGTGRARHGS) form a disordered region. Over residues 63–77 (KPWRQKGTGRARHGS) the composition is skewed to basic residues.

This sequence belongs to the universal ribosomal protein uL4 family. Part of the 50S ribosomal subunit.

In terms of biological role, one of the primary rRNA binding proteins, this protein initially binds near the 5'-end of the 23S rRNA. It is important during the early stages of 50S assembly. It makes multiple contacts with different domains of the 23S rRNA in the assembled 50S subunit and ribosome. Its function is as follows. Forms part of the polypeptide exit tunnel. In Symbiobacterium thermophilum (strain DSM 24528 / JCM 14929 / IAM 14863 / T), this protein is Large ribosomal subunit protein uL4.